A 336-amino-acid chain; its full sequence is Holliday junction branch migration complex subunit RuvB (336 aa).

Residues 4-184 (ADRLISAGAT…FGIVQRLEFY (181 aa)) form a large ATPase domain (RuvB-L) region. ATP contacts are provided by residues isoleucine 23, arginine 24, glycine 65, lysine 68, threonine 69, threonine 70, 131-133 (EDY), arginine 174, tyrosine 184, and arginine 221. Position 69 (threonine 69) interacts with Mg(2+). Residues 185-255 (QVPDLQHIVG…IAAQALDMLN (71 aa)) form a small ATPAse domain (RuvB-S) region. The segment at 258-336 (AEGFDYMDRK…HFGITPPEMP (79 aa)) is head domain (RuvB-H). DNA contacts are provided by arginine 294, arginine 313, and arginine 318.

The protein belongs to the RuvB family. Homohexamer. Forms an RuvA(8)-RuvB(12)-Holliday junction (HJ) complex. HJ DNA is sandwiched between 2 RuvA tetramers; dsDNA enters through RuvA and exits via RuvB. An RuvB hexamer assembles on each DNA strand where it exits the tetramer. Each RuvB hexamer is contacted by two RuvA subunits (via domain III) on 2 adjacent RuvB subunits; this complex drives branch migration. In the full resolvosome a probable DNA-RuvA(4)-RuvB(12)-RuvC(2) complex forms which resolves the HJ.

The protein resides in the cytoplasm. It catalyses the reaction ATP + H2O = ADP + phosphate + H(+). In terms of biological role, the RuvA-RuvB-RuvC complex processes Holliday junction (HJ) DNA during genetic recombination and DNA repair, while the RuvA-RuvB complex plays an important role in the rescue of blocked DNA replication forks via replication fork reversal (RFR). RuvA specifically binds to HJ cruciform DNA, conferring on it an open structure. The RuvB hexamer acts as an ATP-dependent pump, pulling dsDNA into and through the RuvAB complex. RuvB forms 2 homohexamers on either side of HJ DNA bound by 1 or 2 RuvA tetramers; 4 subunits per hexamer contact DNA at a time. Coordinated motions by a converter formed by DNA-disengaged RuvB subunits stimulates ATP hydrolysis and nucleotide exchange. Immobilization of the converter enables RuvB to convert the ATP-contained energy into a lever motion, pulling 2 nucleotides of DNA out of the RuvA tetramer per ATP hydrolyzed, thus driving DNA branch migration. The RuvB motors rotate together with the DNA substrate, which together with the progressing nucleotide cycle form the mechanistic basis for DNA recombination by continuous HJ branch migration. Branch migration allows RuvC to scan DNA until it finds its consensus sequence, where it cleaves and resolves cruciform DNA. This Salmonella choleraesuis (strain SC-B67) protein is Holliday junction branch migration complex subunit RuvB.